The following is a 345-amino-acid chain: Phosphoribosylformylglycinamidine cyclo-ligase (345 aa).

It belongs to the AIR synthase family.

The protein resides in the cytoplasm. It catalyses the reaction 2-formamido-N(1)-(5-O-phospho-beta-D-ribosyl)acetamidine + ATP = 5-amino-1-(5-phospho-beta-D-ribosyl)imidazole + ADP + phosphate + H(+). It functions in the pathway purine metabolism; IMP biosynthesis via de novo pathway; 5-amino-1-(5-phospho-D-ribosyl)imidazole from N(2)-formyl-N(1)-(5-phospho-D-ribosyl)glycinamide: step 2/2. This chain is Phosphoribosylformylglycinamidine cyclo-ligase, found in Shewanella frigidimarina (strain NCIMB 400).